We begin with the raw amino-acid sequence, 469 residues long: MSLNPVIVGGGPAGMAAAIELAEHGVRSTLIEEASRLGGVVYRGPLRDGVQLDYLGPRYCEMLAKLHGDFADHEQMIDVRLNSRVVGAEGTQSLVLLDGEEQVQQVSYEQLILAAGCHERSVPFPGWTLPGVKLLGGLQLQIKSGVVKPQSPVVIAGTGPLLPLVACQLHASGVRVAGVYEACALGKIAKQSLAMLNKPQLFLDGLSMLAYLKLHGIALRYGWGVVEAQGQDALSVVTVAPYSSDWQPDMAKAQRIAAQTLAVGYGFIPRTQLSQQMGLEHNFSDDGYLRASANAWQQSSEPHVHLAGDMGGIRGGEAAMLSGRIAALSILMQRGVLSNEAALQRRQGYERKLASILRFRGAVDRYTARGAGQVELPKGDTVICRCEHTTRNDIERALSQGVQDMASLKMRTRVSMGDCQGRMCVGYCSDRLRQATGRKDVGWIRPRFPLDPIPFSAFPPSDQEVSQHD.

As to quaternary structure, heterotrimer of HcnA, HcnB and HcnC.

It localises to the cell membrane. It catalyses the reaction glycine + 2 A = hydrogen cyanide + 2 AH2 + CO2. Its function is as follows. A three-component membrane-bound flavoenzyme that catalyzes the formation of hydrogen cyanide, a secondary metabolite, by transfer of electrons to a cyanide-resistant branch of the aerobic respiratory chain. Contributes to suppression of black root rot of tobacco. This is Hydrogen cyanide synthase subunit HcnB from Pseudomonas protegens (strain DSM 19095 / LMG 27888 / CFBP 6595 / CHA0).